The following is a 287-amino-acid chain: 2-dehydro-3-deoxyphosphooctonate aldolase (287 aa).

The protein belongs to the KdsA family.

The protein localises to the cytoplasm. It carries out the reaction D-arabinose 5-phosphate + phosphoenolpyruvate + H2O = 3-deoxy-alpha-D-manno-2-octulosonate-8-phosphate + phosphate. It functions in the pathway carbohydrate biosynthesis; 3-deoxy-D-manno-octulosonate biosynthesis; 3-deoxy-D-manno-octulosonate from D-ribulose 5-phosphate: step 2/3. It participates in bacterial outer membrane biogenesis; lipopolysaccharide biosynthesis. In Rhodopseudomonas palustris (strain ATCC BAA-98 / CGA009), this protein is 2-dehydro-3-deoxyphosphooctonate aldolase.